The chain runs to 195 residues: MKRIGLLGGSFDPVHLAHLALARAAAAELRLDSVQLIPAANPWQRAPLRASAGHRLRMIELAIDGEPQLAVNPVELERGGPTYTIDTVRALPADAHYVWLLGTDQLANFCTWRQWQAIAGHVDLAVAARPGAPLAAPAELASWLAAHRRRLIRLPFSPMAISASDIRGRLARGASTAGLLPATVARYIARHGLYR.

The protein belongs to the NadD family.

The enzyme catalyses nicotinate beta-D-ribonucleotide + ATP + H(+) = deamido-NAD(+) + diphosphate. It participates in cofactor biosynthesis; NAD(+) biosynthesis; deamido-NAD(+) from nicotinate D-ribonucleotide: step 1/1. In terms of biological role, catalyzes the reversible adenylation of nicotinate mononucleotide (NaMN) to nicotinic acid adenine dinucleotide (NaAD). The polypeptide is Probable nicotinate-nucleotide adenylyltransferase (Bordetella petrii (strain ATCC BAA-461 / DSM 12804 / CCUG 43448)).